Reading from the N-terminus, the 534-residue chain is MIWYILIIGILLPQSLAHPGFFTSIGQMTDLIHTEKDLVTSLKDYIKAEEDKLEQIKKWAEKLDRLTSTATKDPEGFVGHPVNAFKLMKRLNTEWSELENLVLKDMSDGFISNLTIQRQYFPNDEDQVGAAKALLRLQDTYNLDTDTISKGNLPGVKHKSFLTAEDCFELGKVAYTEADYYHTELWMEQALRQLDEGEISTIDKVSVLDYLSYAVYQQGDLDKALLLTKKLLELDPEHQRANGNLKYFEYIMAKEKDVNKSASDDQSDQKTTPKKKGVAVDYLPERQKYEMLCRGEGIKMTPRRQKKLFCRYHDGNRNPKFILAPAKQEDEWDKPRIIRFHDIISDAEIEIVKDLAKPRLRRATISNPITGDLETVHYRISKSAWLSGYENPVVSRINMRIQDLTGLDVSTAEELQVANYGVGGQYEPHFDFARKDEPDAFKELGTGNRIATWLFYMSDVSAGGATVFPEVGASVWPKKGTAVFWYNLFASGEGDYSTRHAACPVLVGNKWVSNKWLHERGQEFRRPCTLSELE.

The first 17 residues, 1 to 17, serve as a signal peptide directing secretion; sequence MIWYILIIGILLPQSLA. N-linked (GlcNAc...) asparagine glycosylation is present at Asn113. One copy of the TPR repeat lies at 205-238; that stretch reads VSVLDYLSYAVYQQGDLDKALLLTKKLLELDPEH. The N-linked (GlcNAc...) asparagine glycan is linked to Asn259. One can recognise a Fe2OG dioxygenase domain in the interval 411–519; the sequence is TAEELQVANY…KWVSNKWLHE (109 aa). Residues His429, Asp431, and His500 each coordinate Fe cation. 2-oxoglutarate is bound at residue Lys510.

It belongs to the P4HA family. In terms of assembly, heterotetramer of two alpha-1 chains and two beta chains (P4HB)(the beta chain is the multi-functional PDI), where P4HB plays the role of a structural subunit; this tetramer catalyzes the formation of 4-hydroxyproline in collagen. It depends on Fe(2+) as a cofactor. L-ascorbate is required as a cofactor. Expressed in the heart, liver, skeletal muscle, kidney, placenta, lung and pancreas.

It localises to the endoplasmic reticulum lumen. It catalyses the reaction L-prolyl-[collagen] + 2-oxoglutarate + O2 = trans-4-hydroxy-L-prolyl-[collagen] + succinate + CO2. With respect to regulation, inhibited by poly(L-proline). Catalyzes the post-translational formation of 4-hydroxyproline in -Xaa-Pro-Gly- sequences in collagens and other proteins. The protein is Prolyl 4-hydroxylase subunit alpha-1 (P4HA1) of Homo sapiens (Human).